We begin with the raw amino-acid sequence, 70 residues long: Protein SlyX homolog (70 aa).

This sequence belongs to the SlyX family.

The chain is Protein SlyX homolog from Agrobacterium fabrum (strain C58 / ATCC 33970) (Agrobacterium tumefaciens (strain C58)).